A 329-amino-acid chain; its full sequence is Glycerol-3-phosphate dehydrogenase [NAD(P)+] (329 aa).

Residues Y14, R34, and K108 each coordinate NADPH. Positions 108, 137, and 139 each coordinate sn-glycerol 3-phosphate. A141 serves as a coordination point for NADPH. Sn-glycerol 3-phosphate is bound by residues K192, D245, S255, R256, and N257. K192 (proton acceptor) is an active-site residue. R256 contacts NADPH. I280 and E282 together coordinate NADPH.

This sequence belongs to the NAD-dependent glycerol-3-phosphate dehydrogenase family.

Its subcellular location is the cytoplasm. It catalyses the reaction sn-glycerol 3-phosphate + NAD(+) = dihydroxyacetone phosphate + NADH + H(+). The enzyme catalyses sn-glycerol 3-phosphate + NADP(+) = dihydroxyacetone phosphate + NADPH + H(+). It participates in membrane lipid metabolism; glycerophospholipid metabolism. Its function is as follows. Catalyzes the reduction of the glycolytic intermediate dihydroxyacetone phosphate (DHAP) to sn-glycerol 3-phosphate (G3P), the key precursor for phospholipid synthesis. The polypeptide is Glycerol-3-phosphate dehydrogenase [NAD(P)+] (Wigglesworthia glossinidia brevipalpis).